A 375-amino-acid polypeptide reads, in one-letter code: FK506-binding protein 4 (375 aa).

Disordered regions lie at residues 55-78 and 127-265; these read GFEDDYDEEEQEKEPKSTDEEEEI and PPDF…SKMT. Acidic residues-rich tracts occupy residues 56-66 and 131-173; these read FEDDYDEEEQE and FDQD…DPDR. A compositionally biased stretch (basic and acidic residues) spans 196–216; it reads DSKKRAAEKPVKETAAKKLKA. Over residues 217–230 the composition is skewed to low complexity; it reads DASAASAASTPTKA. Over residues 231-261 the composition is skewed to basic and acidic residues; that stretch reads IETKGEKQTKGAKDTKPKSETVEKKTVDKST. Positions 289-375 constitute a PPIase FKBP-type domain; sequence GQKVGMRYVG…VFDVKLVEIK (87 aa).

This sequence belongs to the FKBP-type PPIase family. FKBP3/4 subfamily. Binds to histones H3 and H4.

Its subcellular location is the nucleus. It catalyses the reaction [protein]-peptidylproline (omega=180) = [protein]-peptidylproline (omega=0). Inhibited by both FK506 and rapamycin. Functionally, PPIase that acts as a histone chaperone. Histone proline isomerase that increases the rate of cis-trans isomerization at prolines on the histone H3 N-terminal tail. Proline isomerization influences H3 methylation thereby regulating gene expression. The sequence is that of FK506-binding protein 4 (FPR4) from Mycosarcoma maydis (Corn smut fungus).